The primary structure comprises 379 residues: UDP-N-acetylglucosamine--N-acetylmuramyl-(pentapeptide) pyrophosphoryl-undecaprenol N-acetylglucosamine transferase (379 aa).

UDP-N-acetyl-alpha-D-glucosamine is bound by residues 17-19 (TGG), asparagine 128, arginine 169, serine 197, and glutamine 298.

It belongs to the glycosyltransferase 28 family. MurG subfamily.

Its subcellular location is the cell inner membrane. The enzyme catalyses di-trans,octa-cis-undecaprenyl diphospho-N-acetyl-alpha-D-muramoyl-L-alanyl-D-glutamyl-meso-2,6-diaminopimeloyl-D-alanyl-D-alanine + UDP-N-acetyl-alpha-D-glucosamine = di-trans,octa-cis-undecaprenyl diphospho-[N-acetyl-alpha-D-glucosaminyl-(1-&gt;4)]-N-acetyl-alpha-D-muramoyl-L-alanyl-D-glutamyl-meso-2,6-diaminopimeloyl-D-alanyl-D-alanine + UDP + H(+). It participates in cell wall biogenesis; peptidoglycan biosynthesis. Its function is as follows. Cell wall formation. Catalyzes the transfer of a GlcNAc subunit on undecaprenyl-pyrophosphoryl-MurNAc-pentapeptide (lipid intermediate I) to form undecaprenyl-pyrophosphoryl-MurNAc-(pentapeptide)GlcNAc (lipid intermediate II). This Brucella suis biovar 1 (strain 1330) protein is UDP-N-acetylglucosamine--N-acetylmuramyl-(pentapeptide) pyrophosphoryl-undecaprenol N-acetylglucosamine transferase.